Reading from the N-terminus, the 374-residue chain is tRNA-specific 2-thiouridylase MnmA (374 aa).

ATP is bound by residues 13-20 (GMSGGVDS) and methionine 39. Residues 99–101 (NPD) are interaction with target base in tRNA. Residue cysteine 104 is the Nucleophile of the active site. Residues cysteine 104 and cysteine 201 are joined by a disulfide bond. Residue glycine 128 participates in ATP binding. Residues 151 to 153 (KDQ) are interaction with tRNA. Cysteine 201 acts as the Cysteine persulfide intermediate in catalysis. Residues 313–314 (RY) are interaction with tRNA.

This sequence belongs to the MnmA/TRMU family.

It is found in the cytoplasm. The catalysed reaction is S-sulfanyl-L-cysteinyl-[protein] + uridine(34) in tRNA + AH2 + ATP = 2-thiouridine(34) in tRNA + L-cysteinyl-[protein] + A + AMP + diphosphate + H(+). Its function is as follows. Catalyzes the 2-thiolation of uridine at the wobble position (U34) of tRNA, leading to the formation of s(2)U34. In Streptococcus equi subsp. zooepidemicus (strain H70), this protein is tRNA-specific 2-thiouridylase MnmA.